Consider the following 412-residue polypeptide: Tyrosine--tRNA ligase (412 aa).

Tyr31 serves as a coordination point for L-tyrosine. Residues 36–45 (PTAASLHIGH) carry the 'HIGH' region motif. Tyr162 and Gln166 together coordinate L-tyrosine. A 'KMSKS' region motif is present at residues 222–226 (KIGKT). Residue Lys225 participates in ATP binding. The S4 RNA-binding domain occupies 345-412 (KRWIDLFVGV…KKKKLVLHLI (68 aa)).

This sequence belongs to the class-I aminoacyl-tRNA synthetase family. TyrS type 1 subfamily. As to quaternary structure, homodimer.

It localises to the cytoplasm. The catalysed reaction is tRNA(Tyr) + L-tyrosine + ATP = L-tyrosyl-tRNA(Tyr) + AMP + diphosphate + H(+). In terms of biological role, catalyzes the attachment of tyrosine to tRNA(Tyr) in a two-step reaction: tyrosine is first activated by ATP to form Tyr-AMP and then transferred to the acceptor end of tRNA(Tyr). The polypeptide is Tyrosine--tRNA ligase (Chlamydia caviae (strain ATCC VR-813 / DSM 19441 / 03DC25 / GPIC) (Chlamydophila caviae)).